The chain runs to 1507 residues: DE-cadherin (1507 aa).

A signal peptide spans 1–69 (MSTSVQRMSR…AISLLSPALA (69 aa)). A propeptide spanning residues 70–261 (LHSPPDKNFS…IYLKRPIDKR (192 aa)) is cleaved from the precursor. Cadherin domains lie at 97–195 (VKEE…APAF), 204–301 (MSEN…PPSF), 311–412 (LKEN…IPYY), 420–522 (ILEN…KPHF), 532–633 (LLED…TILE), 631–733 (ILEE…APFL), and 741–835 (WQEN…NDNA). Over 262–1328 (PGQSYAIIVR…VAFSFGIDRN (1067 aa)) the chain is Extracellular. N-linked (GlcNAc...) asparagine glycosylation is found at N317, N466, and N552. N-linked (GlcNAc...) asparagine glycans are attached at residues N766, N949, N983, N999, and N1073. The 40-residue stretch at 1084 to 1123 (VQAQCVCEAPLMRRCLNGGSPRYGENDVCDCIDGFTGPHC) folds into the EGF-like domain. 2 disulfide bridges follow: C1098–C1112 and C1114–C1123. In terms of domain architecture, Laminin G-like spans 1125-1313 (LVSVAFYGSG…SVFRNIDSGC (189 aa)). N-linked (GlcNAc...) asparagine glycosylation is found at N1145, N1274, and N1290. A disulfide bridge links C1287 with C1313. A helical membrane pass occupies residues 1329–1349 (FIIAIIVCLALLLIILLAVVV). The Cytoplasmic portion of the chain corresponds to 1350–1507 (QKKQKNGWHE…NVDDDQGWRI (158 aa)). Residues 1350 to 1507 (QKKQKNGWHE…NVDDDQGWRI (158 aa)) are interaction with Inx2. A disordered region spans residues 1488–1507 (YGEEPSDTDSNVDDDQGWRI). A Phosphoserine modification is found at S1493.

In terms of assembly, interacts (via cytoplasmic region) with Inx2 (via cytoplasmic loop). Interacts with Hakai. Interacts with Myo31DF. Post-translationally, N-glycosylation is important for biosynthesis and function. In early stage 9 and stage 10 oocytes, expressed in border cells, strongly expressed in polar cells and very weakly expressed in the nurse cells (at protein level). In the embryo, expressed in the leading edge cells of the dorsal epidermis (at protein level). Stage 10 embryos exhibit intense expression in epithelial cells. Stage 14 embryos show expression in the hindgut (at the apical poles of cell-cell boundaries), at the apical junctions of tracheal cells and in the dorsal longitudinal trunk. In stage 16 embryos the glial midline cells of the central nervous system show strong expression.

The protein resides in the cell membrane. Its subcellular location is the apical cell membrane. Its function is as follows. Cadherins are calcium-dependent cell adhesion proteins. In connecting cells they preferentially interact with themselves in a homophilic manner; cadherins may thus contribute to the sorting of heterogeneous cell types. During oogenesis, integral component of the guidance mechanisms that regulate the directional persistent collective migration of the border cell (BC) cluster through the nurse cells to the oocyte. Functions downstream of the two chemoattractant receptors, Pvr and Egfr, to promote BC adhesion between the leader cells of the migrating cluster and the surrounding nurse cells. This adhesion increases Rac1 signaling in the leading cells, which in turn stabilizes DE-cadherin/DE-cadherin adhesions through the formation of forward-directed protrusions which attach/detach to the surrounding nurse cells in order to pull the cluster through the egg chamber to the oocyte. Within the BC cluster, also promotes adhesion between BCs, and between BCs and polar cells which enables the lead BC to communicate direction to the other cells in the cluster, providing polarity to each individual cell and ensuring collective behavior. May function in cell intercalation in the lateral epidermis during germband extension. Contributes to the determination of body left-right asymmetry by enhancing Myo31DF activity and inhibiting Myo61F activity. This is DE-cadherin from Drosophila melanogaster (Fruit fly).